The following is a 559-amino-acid chain: CRISPR-associated exonuclease Cas4/endonuclease Cas1 fusion (559 aa).

Positions M1–P198 are CRISPR-associated exonuclease Cas4. C22 provides a ligand contact to [4Fe-4S] cluster. Residues D87 and D100 each coordinate Mn(2+). [4Fe-4S] cluster contacts are provided by C187, C190, and C196. Residues L224–R559 are CRISPR-associated endonuclease Cas1. 3 residues coordinate Mn(2+): E380, H451, and E466.

This sequence in the N-terminal section; belongs to the CRISPR-associated exonuclease Cas4 family. In the C-terminal section; belongs to the CRISPR-associated endonuclease Cas1 family. In terms of assembly, homodimer, forms a heterotetramer with a Cas2 homodimer. [4Fe-4S] cluster serves as cofactor. Mg(2+) is required as a cofactor. The cofactor is Mn(2+).

It carries out the reaction exonucleolytic cleavage in the 5'- to 3'-direction to yield nucleoside 3'-phosphates.. Its function is as follows. CRISPR (clustered regularly interspaced short palindromic repeat), is an adaptive immune system that provides protection against mobile genetic elements (viruses, transposable elements and conjugative plasmids). CRISPR clusters contain spacers, sequences complementary to antecedent mobile elements, and target invading nucleic acids. CRISPR clusters are transcribed and processed into CRISPR RNA (crRNA). The Cas4 region acts as a ssDNA exonuclease, while the Cas1 region acts as a dsDNA endonuclease. Involved in the integration of spacer DNA into the CRISPR cassette. This Geobacter sulfurreducens (strain ATCC 51573 / DSM 12127 / PCA) protein is CRISPR-associated exonuclease Cas4/endonuclease Cas1 fusion (cas4-cas1).